A 544-amino-acid chain; its full sequence is Prolyl 4-hydroxylase subunit alpha-3 (544 aa).

The N-terminal stretch at 1–24 (MGPGARLAALLVLLKLGVGDPAAA) is a signal peptide. A TPR repeat occupies 227-260 (EDALDYLAFACYQVGNVSCALSLSREFLVYSPDN). N242 is a glycosylation site (N-linked (GlcNAc...) asparagine). The 108-residue stretch at 422-529 (YAEYLQVVNY…KWVANKWIHE (108 aa)) folds into the Fe2OG dioxygenase domain. Fe cation contacts are provided by H440 and D442. N482 carries an N-linked (GlcNAc...) asparagine glycan. H510 is a binding site for Fe cation. K520 contacts 2-oxoglutarate.

It belongs to the P4HA family. In terms of assembly, heterotetramer of two alpha-3 chains and two beta chains (the beta chain is the multi-functional PDI). Fe(2+) serves as cofactor. L-ascorbate is required as a cofactor. Post-translationally, N-glycosylation plays no role in the catalytic activity.

It localises to the endoplasmic reticulum lumen. It catalyses the reaction L-prolyl-[collagen] + 2-oxoglutarate + O2 = trans-4-hydroxy-L-prolyl-[collagen] + succinate + CO2. Functionally, catalyzes the post-translational formation of 4-hydroxyproline in -Xaa-Pro-Gly- sequences in collagens and other proteins. This is Prolyl 4-hydroxylase subunit alpha-3 (P4ha3) from Rattus norvegicus (Rat).